A 349-amino-acid chain; its full sequence is Homeobox-leucine zipper protein HOX5 (349 aa).

The segment at residues 83–142 (APEKKRRLTAEQVQMLERSFEEENKLEPERKTELARRLGMAPRQVAVWFQNRRARWKTKQ) is a DNA-binding region (homeobox). The tract at residues 141 to 185 (KQLEHDFDRLKAAYDALAADHHALLSDNDRLRAQVISLTEKLQDK) is leucine-zipper. The interval 181-253 (KLQDKETSPS…GTNDDGDGGA (73 aa)) is disordered. Positions 188-198 (SPSSATITTAA) are enriched in low complexity.

It belongs to the HD-ZIP homeobox family. Class I subfamily. In terms of assembly, homodimer. May form a heterodimer with HOX4. Expressed in seedlings, roots, leaves, nodes, internodes, flowers and embryo.

Its subcellular location is the nucleus. In terms of biological role, probable transcription activator that binds to the DNA sequence 5'-CAAT[AT]ATTG-3'. This Oryza sativa subsp. japonica (Rice) protein is Homeobox-leucine zipper protein HOX5 (HOX5).